We begin with the raw amino-acid sequence, 159 residues long: Aspartate carbamoyltransferase regulatory chain (159 aa).

Zn(2+)-binding residues include Cys-113, Cys-118, Cys-143, and Cys-146.

It belongs to the PyrI family. As to quaternary structure, contains catalytic and regulatory chains. It depends on Zn(2+) as a cofactor.

Its function is as follows. Involved in allosteric regulation of aspartate carbamoyltransferase. The protein is Aspartate carbamoyltransferase regulatory chain of Methanococcoides burtonii (strain DSM 6242 / NBRC 107633 / OCM 468 / ACE-M).